The following is a 161-amino-acid chain: Cyclic pyranopterin monophosphate synthase (161 aa).

Substrate contacts are provided by residues 75-77 (LCH) and 113-114 (ME). D128 is a catalytic residue.

This sequence belongs to the MoaC family. In terms of assembly, homohexamer; trimer of dimers.

It carries out the reaction (8S)-3',8-cyclo-7,8-dihydroguanosine 5'-triphosphate = cyclic pyranopterin phosphate + diphosphate. It participates in cofactor biosynthesis; molybdopterin biosynthesis. Its function is as follows. Catalyzes the conversion of (8S)-3',8-cyclo-7,8-dihydroguanosine 5'-triphosphate to cyclic pyranopterin monophosphate (cPMP). This chain is Cyclic pyranopterin monophosphate synthase, found in Cupriavidus pinatubonensis (strain JMP 134 / LMG 1197) (Cupriavidus necator (strain JMP 134)).